A 60-amino-acid polypeptide reads, in one-letter code: Large ribosomal subunit protein bL32 (60 aa).

2 disordered regions span residues 1–28 (MAVQ…PGIA) and 41–60 (HISP…KSEA). A compositionally biased stretch (basic residues) spans 9–19 (SPSKRGMHRSH).

The protein belongs to the bacterial ribosomal protein bL32 family.

In Verminephrobacter eiseniae (strain EF01-2), this protein is Large ribosomal subunit protein bL32.